A 374-amino-acid polypeptide reads, in one-letter code: AA14 family lytic polysaccharide monooxygenase B (374 aa).

Residues Met-1–Gly-18 form the signal peptide. Asn-31, Asn-49, Asn-94, and Asn-151 each carry an N-linked (GlcNAc...) asparagine glycan. Cystine bridges form between Cys-85/Cys-108, Cys-127/Cys-154, Cys-171/Cys-176, Cys-178/Cys-200, and Cys-220/Cys-236. N-linked (GlcNAc...) asparagine glycans are attached at residues Asn-235 and Asn-315. The disordered stretch occupies residues Ile-306 to Phe-374. A compositionally biased stretch (low complexity) spans Pro-313–Ala-344.

The protein belongs to the polysaccharide monooxygenase AA14 family. Cu(2+) is required as a cofactor.

Its subcellular location is the secreted. Lytic polysaccharide monooxygenase (LPMO) that oxidatively cleaves xylan with both C1 and C4 regioselectivity and that specifically targets the protective shield made by heteroxylans that cover cellulose microfibrils in wood. Catalysis by LPMOs requires the reduction of the active-site copper from Cu(II) to Cu(I) by a reducing agent and H(2)O(2) or O(2) as a cosubstrate. Cleavage occurs only when xylans are bound to cellulose and not when they are in solution. Increases the efficiency of wood saccharification through oxidative cleavage of highly refractory xylan-coated cellulose fibers via synergistic relationship with xylan-active enzymes, xylobiohydrolases and cellobiohydrolases. The sequence is that of AA14 family lytic polysaccharide monooxygenase B from Pycnoporus cinnabarinus (Cinnabar-red polypore).